Reading from the N-terminus, the 283-residue chain is Phosphatidylserine decarboxylase proenzyme (283 aa).

Catalysis depends on charge relay system; for autoendoproteolytic cleavage activity residues Asp88, His145, and Ser248. The Schiff-base intermediate with substrate; via pyruvic acid; for decarboxylase activity role is filled by Ser248. A Pyruvic acid (Ser); by autocatalysis modification is found at Ser248.

The protein belongs to the phosphatidylserine decarboxylase family. PSD-B subfamily. Prokaryotic type I sub-subfamily. As to quaternary structure, heterodimer of a large membrane-associated beta subunit and a small pyruvoyl-containing alpha subunit. The cofactor is pyruvate. Is synthesized initially as an inactive proenzyme. Formation of the active enzyme involves a self-maturation process in which the active site pyruvoyl group is generated from an internal serine residue via an autocatalytic post-translational modification. Two non-identical subunits are generated from the proenzyme in this reaction, and the pyruvate is formed at the N-terminus of the alpha chain, which is derived from the carboxyl end of the proenzyme. The autoendoproteolytic cleavage occurs by a canonical serine protease mechanism, in which the side chain hydroxyl group of the serine supplies its oxygen atom to form the C-terminus of the beta chain, while the remainder of the serine residue undergoes an oxidative deamination to produce ammonia and the pyruvoyl prosthetic group on the alpha chain. During this reaction, the Ser that is part of the protease active site of the proenzyme becomes the pyruvoyl prosthetic group, which constitutes an essential element of the active site of the mature decarboxylase.

The protein localises to the cell membrane. The catalysed reaction is a 1,2-diacyl-sn-glycero-3-phospho-L-serine + H(+) = a 1,2-diacyl-sn-glycero-3-phosphoethanolamine + CO2. The protein operates within phospholipid metabolism; phosphatidylethanolamine biosynthesis; phosphatidylethanolamine from CDP-diacylglycerol: step 2/2. Functionally, catalyzes the formation of phosphatidylethanolamine (PtdEtn) from phosphatidylserine (PtdSer). This chain is Phosphatidylserine decarboxylase proenzyme, found in Variovorax paradoxus (strain S110).